The chain runs to 469 residues: D-3-phosphoglycerate dehydrogenase 2 (469 aa).

Ser-2 is modified (N-acetylserine). Ser-22, Ser-29, and Ser-33 each carry phosphoserine. NAD(+) contacts are provided by residues 208–209 (HI), Asp-228, 285–287 (ASR), and Asp-311. The active site involves Arg-287. Residue Glu-316 is part of the active site. The active-site Proton donor is the His-347. 347-350 (HIGG) lines the NAD(+) pocket. The 71-residue stretch at 399-469 (RVLYIHRNVP…SAKVSIRLLY (71 aa)) folds into the ACT domain.

This sequence belongs to the D-isomer specific 2-hydroxyacid dehydrogenase family.

The enzyme catalyses (2R)-3-phosphoglycerate + NAD(+) = 3-phosphooxypyruvate + NADH + H(+). It carries out the reaction (R)-2-hydroxyglutarate + NAD(+) = 2-oxoglutarate + NADH + H(+). The protein operates within amino-acid biosynthesis; L-serine biosynthesis; L-serine from 3-phospho-D-glycerate: step 1/3. Functionally, catalyzes the reversible oxidation of 3-phospho-D-glycerate to 3-phosphonooxypyruvate, the first step of the phosphorylated L-serine biosynthesis pathway. Also catalyzes the reversible oxidation of 2-hydroxyglutarate to 2-oxoglutarate. This chain is D-3-phosphoglycerate dehydrogenase 2 (SER33), found in Saccharomyces cerevisiae (strain ATCC 204508 / S288c) (Baker's yeast).